A 634-amino-acid polypeptide reads, in one-letter code: Chaperone protein HtpG (634 aa).

The a; substrate-binding stretch occupies residues 1-342 (MSVETQKETL…SNDLSLNVSR (342 aa)). A b region spans residues 343-559 (EILQKDPIID…EQDLGLQMRQ (217 aa)). A c region spans residues 560–634 (ILEASGQKVP…LNKLLVELSV (75 aa)).

This sequence belongs to the heat shock protein 90 family. In terms of assembly, homodimer.

The protein localises to the cytoplasm. Molecular chaperone. Has ATPase activity. In Pseudomonas fluorescens (strain ATCC BAA-477 / NRRL B-23932 / Pf-5), this protein is Chaperone protein HtpG.